We begin with the raw amino-acid sequence, 136 residues long: Large ribosomal subunit protein uL16 (136 aa).

This sequence belongs to the universal ribosomal protein uL16 family. In terms of assembly, part of the 50S ribosomal subunit.

Binds 23S rRNA and is also seen to make contacts with the A and possibly P site tRNAs. In Aliivibrio fischeri (strain ATCC 700601 / ES114) (Vibrio fischeri), this protein is Large ribosomal subunit protein uL16.